We begin with the raw amino-acid sequence, 278 residues long: Chitosanase (278 aa).

The N-terminal stretch at 1–41 (MRLKHPTARLALAALLVAVPRSVAAAGTVHAAPAPAGATRL) is a signal peptide. Glu63 (proton donor) is an active-site residue. The active-site Nucleophile is the Asp81.

Belongs to the glycosyl hydrolase 46 family.

The protein resides in the secreted. It catalyses the reaction Endohydrolysis of beta-(1-&gt;4)-linkages between D-glucosamine residues in a partly acetylated chitosan.. Its function is as follows. Aids in the defense against invading fungal pathogens by degrading their cell wall chitosan. This is Chitosanase (csn) from Nocardioides sp. (strain N106).